The sequence spans 359 residues: Nicotinate-nucleotide--dimethylbenzimidazole phosphoribosyltransferase (359 aa).

Glutamate 318 acts as the Proton acceptor in catalysis.

This sequence belongs to the CobT family. In terms of assembly, homodimer.

It catalyses the reaction 5,6-dimethylbenzimidazole + nicotinate beta-D-ribonucleotide = alpha-ribazole 5'-phosphate + nicotinate + H(+). It participates in nucleoside biosynthesis; alpha-ribazole biosynthesis; alpha-ribazole from 5,6-dimethylbenzimidazole: step 1/2. Catalyzes the synthesis of alpha-ribazole-5'-phosphate from nicotinate mononucleotide (NAMN) and 5,6-dimethylbenzimidazole (DMB). This is Nicotinate-nucleotide--dimethylbenzimidazole phosphoribosyltransferase from Escherichia coli (strain UTI89 / UPEC).